Here is a 230-residue protein sequence, read N- to C-terminus: Uracil phosphoribosyltransferase (230 aa).

Position 38-42 (38-42) interacts with GTP; that stretch reads KGLVK. 5-phospho-alpha-D-ribose 1-diphosphate contacts are provided by residues Arg-87, Arg-112, and 140 to 148; that span reads DPMIATGST. Uracil is bound by residues Ile-204 and 209–211; that span reads GDA. 5-phospho-alpha-D-ribose 1-diphosphate is bound at residue Asp-210.

It belongs to the UPRTase family. Requires Mg(2+) as cofactor.

The catalysed reaction is UMP + diphosphate = 5-phospho-alpha-D-ribose 1-diphosphate + uracil. It participates in pyrimidine metabolism; UMP biosynthesis via salvage pathway; UMP from uracil: step 1/1. Allosterically activated by GTP. Its function is as follows. Catalyzes the conversion of uracil and 5-phospho-alpha-D-ribose 1-diphosphate (PRPP) to UMP and diphosphate. In Thermococcus kodakarensis (strain ATCC BAA-918 / JCM 12380 / KOD1) (Pyrococcus kodakaraensis (strain KOD1)), this protein is Uracil phosphoribosyltransferase.